Reading from the N-terminus, the 198-residue chain is Nucleoside triphosphate pyrophosphatase (198 aa).

Asp-70 acts as the Proton acceptor in catalysis.

Belongs to the Maf family. Requires a divalent metal cation as cofactor.

It is found in the cytoplasm. The catalysed reaction is a ribonucleoside 5'-triphosphate + H2O = a ribonucleoside 5'-phosphate + diphosphate + H(+). It catalyses the reaction a 2'-deoxyribonucleoside 5'-triphosphate + H2O = a 2'-deoxyribonucleoside 5'-phosphate + diphosphate + H(+). Functionally, nucleoside triphosphate pyrophosphatase. May have a dual role in cell division arrest and in preventing the incorporation of modified nucleotides into cellular nucleic acids. The sequence is that of Nucleoside triphosphate pyrophosphatase from Thermosynechococcus vestitus (strain NIES-2133 / IAM M-273 / BP-1).